The following is a 229-amino-acid chain: 2-phytyl-1,4-naphtoquinone methyltransferase (229 aa).

Belongs to the class I-like SAM-binding methyltransferase superfamily. MenG/UbiE family.

It carries out the reaction demethylphylloquinol + S-adenosyl-L-methionine = phylloquinol + S-adenosyl-L-homocysteine + H(+). Its pathway is cofactor biosynthesis; phylloquinone biosynthesis. Functionally, methyltransferase required for the conversion of 2-phytyl-1,4-beta-naphthoquinol to phylloquinol. This chain is 2-phytyl-1,4-naphtoquinone methyltransferase, found in Trichormus variabilis (strain ATCC 29413 / PCC 7937) (Anabaena variabilis).